A 453-amino-acid polypeptide reads, in one-letter code: Cobyrinate a,c-diamide synthase (453 aa).

The GATase cobBQ-type domain occupies 250 to 440 (RIAVPFDEAF…IHTHTACLPD (191 aa)). Residue cysteine 332 is the Nucleophile of the active site.

Belongs to the CobB/CbiA family. The cofactor is Mg(2+).

The enzyme catalyses cob(II)yrinate + 2 L-glutamine + 2 ATP + 2 H2O = cob(II)yrinate a,c diamide + 2 L-glutamate + 2 ADP + 2 phosphate + 2 H(+). The catalysed reaction is Ni-sirohydrochlorin + 2 L-glutamine + 2 ATP + 2 H2O = Ni-sirohydrochlorin a,c-diamide + 2 L-glutamate + 2 ADP + 2 phosphate + 2 H(+). The protein operates within cofactor biosynthesis; adenosylcobalamin biosynthesis; cob(II)yrinate a,c-diamide from sirohydrochlorin (anaerobic route): step 10/10. Functionally, catalyzes the ATP-dependent amidation of the two carboxylate groups at positions a and c of cobyrinate, using either L-glutamine or ammonia as the nitrogen source. Involved in the biosynthesis of the unique nickel-containing tetrapyrrole coenzyme F430, the prosthetic group of methyl-coenzyme M reductase (MCR), which plays a key role in methanogenesis and anaerobic methane oxidation. Catalyzes the ATP-dependent amidation of the two carboxylate groups at positions a and c of Ni-sirohydrochlorin, using L-glutamine or ammonia as the nitrogen source. The polypeptide is Cobyrinate a,c-diamide synthase (Methanosphaera stadtmanae (strain ATCC 43021 / DSM 3091 / JCM 11832 / MCB-3)).